The following is a 145-amino-acid chain: Oleosin L (145 aa).

A2 is subject to N-acetylalanine. 2 helical membrane passes run 36–56 (GSLLVLSGLTLAGTVIALTIA) and 59–79 (LLVIFSPVLVPAVITIFLLGA). Positions 58–69 (PLLVIFSPVLVP) match the Proline-knot motif. Residues 123 to 132 (KAREMKDRAE) show a composition bias toward basic and acidic residues. A disordered region spans residues 123–145 (KAREMKDRAEQFSQQPVAGSQTS). Residues 133–145 (QFSQQPVAGSQTS) show a composition bias toward polar residues.

This sequence belongs to the oleosin family. Expressed in seeds (at protein level).

Its subcellular location is the lipid droplet. It is found in the membrane. In terms of biological role, may have a structural role to stabilize the lipid body during desiccation of the seed by preventing coalescence of the oil. Probably interacts with both lipid and phospholipid moieties of lipid bodies. May also provide recognition signals for specific lipase anchorage in lipolysis during seedling growth. The sequence is that of Oleosin L from Sesamum indicum (Oriental sesame).